A 290-amino-acid polypeptide reads, in one-letter code: Nucleoid occlusion protein (290 aa).

Residues 153–172 (EALAQRLGKGQSTIANKLRL) constitute a DNA-binding region (H-T-H motif).

The protein belongs to the ParB family.

The protein resides in the cytoplasm. Its subcellular location is the nucleoid. Its function is as follows. Effects nucleoid occlusion by binding relatively nonspecifically to DNA and preventing the assembly of the division machinery in the vicinity of the nucleoid, especially under conditions that disturb the cell cycle. It helps to coordinate cell division and chromosome segregation by preventing the formation of the Z ring through the nucleoid, which would cause chromosome breakage. The chain is Nucleoid occlusion protein from Bacillus cereus (strain G9842).